Consider the following 755-residue polypeptide: Thermostable beta-glucosidase B (755 aa).

Residue D231 is part of the active site.

This sequence belongs to the glycosyl hydrolase 3 family.

It carries out the reaction Hydrolysis of terminal, non-reducing beta-D-glucosyl residues with release of beta-D-glucose.. The protein operates within glycan metabolism; cellulose degradation. The chain is Thermostable beta-glucosidase B (bglB) from Acetivibrio thermocellus (strain ATCC 27405 / DSM 1237 / JCM 9322 / NBRC 103400 / NCIMB 10682 / NRRL B-4536 / VPI 7372) (Clostridium thermocellum).